A 208-amino-acid chain; its full sequence is Thiamine-phosphate synthase (208 aa).

Residues 36-40 (QLRMK) and D68 contribute to the 4-amino-2-methyl-5-(diphosphooxymethyl)pyrimidine site. Mg(2+)-binding residues include D69 and D88. T107 is a binding site for 4-amino-2-methyl-5-(diphosphooxymethyl)pyrimidine. Position 133–135 (133–135 (TTT)) interacts with 2-[(2R,5Z)-2-carboxy-4-methylthiazol-5(2H)-ylidene]ethyl phosphate. K136 contributes to the 4-amino-2-methyl-5-(diphosphooxymethyl)pyrimidine binding site. G169 is a 2-[(2R,5Z)-2-carboxy-4-methylthiazol-5(2H)-ylidene]ethyl phosphate binding site.

This sequence belongs to the thiamine-phosphate synthase family. Mg(2+) serves as cofactor.

It carries out the reaction 2-[(2R,5Z)-2-carboxy-4-methylthiazol-5(2H)-ylidene]ethyl phosphate + 4-amino-2-methyl-5-(diphosphooxymethyl)pyrimidine + 2 H(+) = thiamine phosphate + CO2 + diphosphate. It catalyses the reaction 2-(2-carboxy-4-methylthiazol-5-yl)ethyl phosphate + 4-amino-2-methyl-5-(diphosphooxymethyl)pyrimidine + 2 H(+) = thiamine phosphate + CO2 + diphosphate. The enzyme catalyses 4-methyl-5-(2-phosphooxyethyl)-thiazole + 4-amino-2-methyl-5-(diphosphooxymethyl)pyrimidine + H(+) = thiamine phosphate + diphosphate. It functions in the pathway cofactor biosynthesis; thiamine diphosphate biosynthesis; thiamine phosphate from 4-amino-2-methyl-5-diphosphomethylpyrimidine and 4-methyl-5-(2-phosphoethyl)-thiazole: step 1/1. In terms of biological role, condenses 4-methyl-5-(beta-hydroxyethyl)thiazole monophosphate (THZ-P) and 2-methyl-4-amino-5-hydroxymethyl pyrimidine pyrophosphate (HMP-PP) to form thiamine monophosphate (TMP). The polypeptide is Thiamine-phosphate synthase (Phocaeicola vulgatus (strain ATCC 8482 / DSM 1447 / JCM 5826 / CCUG 4940 / NBRC 14291 / NCTC 11154) (Bacteroides vulgatus)).